The following is a 122-amino-acid chain: Large ribosomal subunit protein uL14 (122 aa).

This sequence belongs to the universal ribosomal protein uL14 family. As to quaternary structure, part of the 50S ribosomal subunit. Forms a cluster with proteins L3 and L19. In the 70S ribosome, L14 and L19 interact and together make contacts with the 16S rRNA in bridges B5 and B8.

Binds to 23S rRNA. Forms part of two intersubunit bridges in the 70S ribosome. In Mycoplasma genitalium (strain ATCC 33530 / DSM 19775 / NCTC 10195 / G37) (Mycoplasmoides genitalium), this protein is Large ribosomal subunit protein uL14.